The following is a 399-amino-acid chain: Delta(12) acyl-lipid conjugase (11E,13E-forming) (399 aa).

Residues 11 to 30 (RNGGGPKKKMGPGQGLGPGE) form a disordered region. 2 consecutive transmembrane segments (helical) span residues 61–81 (FSYL…ADTY) and 93–113 (LAWP…WGIA). The short motif at 114–118 (HDCGH) is the Histidine box-1 element. A helical membrane pass occupies residues 126–146 (LVDDVVGFLIHSLVFVPYFSF). A Histidine box-2 motif is present at residues 150 to 154 (HRRHH). 3 helical membrane passes run 188–208 (VFII…FNIS), 232–252 (VLVH…YRIA), and 258–278 (GWLI…VVLI). The Histidine box-3 motif lies at 325–329 (HVVHH).

Belongs to the fatty acid desaturase type 1 family. As to expression, expressed in developing seeds, but not in leaves.

It localises to the membrane. It catalyses the reaction a (9Z,12Z)-octadecadienoyl-containing glycerolipid + 2 Fe(II)-[cytochrome b5] + O2 + 2 H(+) = a (9Z,11E,13E)-octadecatrienoyl-containing glycerolipid + 2 Fe(III)-[cytochrome b5] + 2 H2O. It carries out the reaction (9Z,12Z,15Z)-octadecatrienoyl-containing glycerolipid + 2 Fe(II)-[cytochrome b5] + O2 + 2 H(+) = a (9Z,11E,13E,15Z)-octadecatetraenoyl-containing glycerolipid + 2 Fe(III)-[cytochrome b5] + 2 H2O. It functions in the pathway lipid metabolism; polyunsaturated fatty acid biosynthesis. Its function is as follows. Converts linoleic acid to alpha-eleostearic acid (18:3(9Z,11E,13E)) and alpha-linolenic acid to alpha-parinaric acid (18:4(9Z,11E, 13E, 15Z)). Converts a single cis double bond at carbon 12 to two conjugated trans bonds at positions 11 and 13. This chain is Delta(12) acyl-lipid conjugase (11E,13E-forming), found in Momordica charantia (Bitter gourd).